Reading from the N-terminus, the 402-residue chain is Imidazolonepropionase (402 aa).

H66 and H68 together coordinate Fe(3+). The Zn(2+) site is built by H66 and H68. 4-imidazolone-5-propanoate contacts are provided by R75, Y138, and H171. Y138 contributes to the N-formimidoyl-L-glutamate binding site. Residue H236 coordinates Fe(3+). H236 contacts Zn(2+). Q239 provides a ligand contact to 4-imidazolone-5-propanoate. Residue D311 participates in Fe(3+) binding. Position 311 (D311) interacts with Zn(2+). 2 residues coordinate N-formimidoyl-L-glutamate: N313 and G315. Residue T316 participates in 4-imidazolone-5-propanoate binding.

It belongs to the metallo-dependent hydrolases superfamily. HutI family. Zn(2+) is required as a cofactor. The cofactor is Fe(3+).

The protein resides in the cytoplasm. It catalyses the reaction 4-imidazolone-5-propanoate + H2O = N-formimidoyl-L-glutamate. Its pathway is amino-acid degradation; L-histidine degradation into L-glutamate; N-formimidoyl-L-glutamate from L-histidine: step 3/3. In terms of biological role, catalyzes the hydrolytic cleavage of the carbon-nitrogen bond in imidazolone-5-propanoate to yield N-formimidoyl-L-glutamate. It is the third step in the universal histidine degradation pathway. This Pseudomonas paraeruginosa (strain DSM 24068 / PA7) (Pseudomonas aeruginosa (strain PA7)) protein is Imidazolonepropionase.